Consider the following 415-residue polypeptide: Coiled-coil domain-containing glutamate-rich protein 1 (415 aa).

Residues 1–11 are compositionally biased toward basic and acidic residues; sequence MTQTLDTKEDP. Disordered regions lie at residues 1-20, 29-64, 133-162, 202-241, and 255-372; these read MTQT…GWAS, FGPR…QQYG, RPPG…SPPV, QEKL…GQED, and PSLV…PLEM. Composition is skewed to basic residues over residues 31 to 46 and 135 to 156; these read PRRR…RPRY and PGRK…RRSA. 2 coiled-coil regions span residues 197-224 and 264-366; these read EDMR…STAS and DEEK…EEEN. A compositionally biased stretch (low complexity) spans 211-220; that stretch reads ALRAQQAQAA. Over residues 275–363 the composition is skewed to acidic residues; sequence VEEEEEGERE…EGLAEDEQTE (89 aa).

The protein resides in the nucleus. Its function is as follows. Regulator of histone epigenetic modifications and chromatin compaction into the sperm head, required for histone-to-protamine (HTP) transition. HTP is a key event in which somatic histones are first replaced by testis-specific histone variants, then transition proteins (TNPs) are incorporated into the spermatid nucleus, and finally protamines (PRMs) replace the TNPs to promote chromatin condensation. This Bos taurus (Bovine) protein is Coiled-coil domain-containing glutamate-rich protein 1 (CCER1).